A 457-amino-acid chain; its full sequence is Tubulin beta chain (457 aa).

Positions 11, 69, 138, 142, 143, 144, 204, and 226 each coordinate GTP. Glu-69 provides a ligand contact to Mg(2+). A phosphoserine mark is found at Ser-278 and Ser-280. The disordered stretch occupies residues 423–457 (QQYQEATVEDDEEVDENGDFGAPQNQDEPITENFE). Residues 429–440 (TVEDDEEVDENG) are compositionally biased toward acidic residues.

Belongs to the tubulin family. Dimer of alpha and beta chains. A typical microtubule is a hollow water-filled tube with an outer diameter of 25 nm and an inner diameter of 15 nM. Alpha-beta heterodimers associate head-to-tail to form protofilaments running lengthwise along the microtubule wall with the beta-tubulin subunit facing the microtubule plus end conferring a structural polarity. Microtubules usually have 13 protofilaments but different protofilament numbers can be found in some organisms and specialized cells. Mg(2+) is required as a cofactor.

It localises to the cytoplasm. The protein resides in the cytoskeleton. Tubulin is the major constituent of microtubules, a cylinder consisting of laterally associated linear protofilaments composed of alpha- and beta-tubulin heterodimers. Microtubules grow by the addition of GTP-tubulin dimers to the microtubule end, where a stabilizing cap forms. Below the cap, tubulin dimers are in GDP-bound state, owing to GTPase activity of alpha-tubulin. This Saccharomyces cerevisiae (strain ATCC 204508 / S288c) (Baker's yeast) protein is Tubulin beta chain (TUB2).